Reading from the N-terminus, the 1194-residue chain is DNA polymerase catalytic subunit (1194 aa).

The protein belongs to the DNA polymerase type-B family. In terms of assembly, forms a complex with the ssDNA-binding protein, the DNA polymerase processivity factor, and the alkaline exonuclease. Interacts with the helicase-primase complex composed of the primase, the helicase and the primase-associated factor; this interaction may coordinate leading and lagging strand DNA synthesis at the replication fork.

The protein localises to the host nucleus. The catalysed reaction is DNA(n) + a 2'-deoxyribonucleoside 5'-triphosphate = DNA(n+1) + diphosphate. It carries out the reaction Endonucleolytic cleavage to 5'-phosphomonoester.. In terms of biological role, replicates viral genomic DNA. The replication complex is composed of six viral proteins: the DNA polymerase, processivity factor, primase, primase-associated factor, helicase, and ssDNA-binding protein. Additionally, the polymerase contains an intrinsic ribonuclease H (RNase H) activity that specifically degrades RNA/DNA heteroduplexes or duplex DNA substrates in the 5' to 3' direction. Therefore, it can catalyze the excision of the RNA primers that initiate the synthesis of Okazaki fragments at a replication fork during viral DNA replication. The polypeptide is DNA polymerase catalytic subunit (Varicella-zoster virus (strain Dumas) (HHV-3)).